A 212-amino-acid chain; its full sequence is Large ribosomal subunit protein uL3 (212 aa).

The disordered stretch occupies residues 131-155; the sequence is RGNMTHGSKNHRLPGSTGAGTTPGR.

It belongs to the universal ribosomal protein uL3 family. As to quaternary structure, part of the 50S ribosomal subunit. Forms a cluster with proteins L14 and L19.

In terms of biological role, one of the primary rRNA binding proteins, it binds directly near the 3'-end of the 23S rRNA, where it nucleates assembly of the 50S subunit. The protein is Large ribosomal subunit protein uL3 of Microcystis aeruginosa (strain NIES-843 / IAM M-2473).